Consider the following 101-residue polypeptide: Ubiquitin-related modifier 1 (101 aa).

At Gly101 the chain carries 1-thioglycine. Gly101 is covalently cross-linked (Glycyl lysine isopeptide (Gly-Lys) (interchain with K-? in acceptor proteins)).

It belongs to the URM1 family. As to quaternary structure, component of a complex at least composed of URM1, CTU2/NCS2 and CTU1/ATPBD3. C-terminal thiocarboxylation occurs in 2 steps, it is first acyl-adenylated (-COAMP) via the hesA/moeB/thiF part of MOCS3, then thiocarboxylated (-COSH) via the rhodanese domain of MOCS3.

It localises to the cytoplasm. The protein operates within tRNA modification; 5-methoxycarbonylmethyl-2-thiouridine-tRNA biosynthesis. Functionally, acts as a sulfur carrier required for 2-thiolation of mcm(5)S(2)U at tRNA wobble positions of cytosolic tRNA(Lys), tRNA(Glu) and tRNA(Gln). Serves as sulfur donor in tRNA 2-thiolation reaction by being thiocarboxylated (-COSH) at its C-terminus by MOCS3. The sulfur is then transferred to tRNA to form 2-thiolation of mcm(5)S(2)U. Also acts as a ubiquitin-like protein (UBL) that is covalently conjugated via an isopeptide bond to lysine residues of target proteins such as MOCS3, ATPBD3, CTU2, USP15 and CAS. The thiocarboxylated form serves as substrate for conjugation and oxidative stress specifically induces the formation of UBL-protein conjugates. This Bos taurus (Bovine) protein is Ubiquitin-related modifier 1.